A 1045-amino-acid chain; its full sequence is DNA polymerase (1045 aa).

The interval 331 to 355 is disordered; that stretch reads IKENEESDSESDNDDEEDKKENDGA. The span at 335–348 shows a compositional bias: acidic residues; it reads EESDSESDNDDEED.

It belongs to the DNA polymerase type-B family.

The enzyme catalyses DNA(n) + a 2'-deoxyribonucleoside 5'-triphosphate = DNA(n+1) + diphosphate. This is DNA polymerase (dpo) from Phaeocystis pouchetii (PpV01).